The chain runs to 80 residues: Cytochrome c oxidase subunit 7B, mitochondrial (80 aa).

Residues 1 to 24 constitute a mitochondrion transit peptide; sequence MFPLVKNALNRLQVRSIQQTMARQ. Residues 25 to 32 lie on the Mitochondrial matrix side of the membrane; it reads SHQKRTPD. A helical membrane pass occupies residues 33-59; the sequence is FHDKYGNAVLASGATFCIVTWTYVATQ. Over 60 to 80 the chain is Mitochondrial intermembrane; it reads VGIEWNLSPVGRVTPKEWRNQ.

This sequence belongs to the cytochrome c oxidase VIIb family. As to quaternary structure, component of the cytochrome c oxidase (complex IV, CIV), a multisubunit enzyme composed of 14 subunits. The complex is composed of a catalytic core of 3 subunits MT-CO1, MT-CO2 and MT-CO3, encoded in the mitochondrial DNA, and 11 supernumerary subunits COX4I, COX5A, COX5B, COX6A, COX6B, COX6C, COX7A, COX7B, COX7C, COX8 and NDUFA4, which are encoded in the nuclear genome. The complex exists as a monomer or a dimer and forms supercomplexes (SCs) in the inner mitochondrial membrane with NADH-ubiquinone oxidoreductase (complex I, CI) and ubiquinol-cytochrome c oxidoreductase (cytochrome b-c1 complex, complex III, CIII), resulting in different assemblies (supercomplex SCI(1)III(2)IV(1) and megacomplex MCI(2)III(2)IV(2)).

Its subcellular location is the mitochondrion inner membrane. The protein operates within energy metabolism; oxidative phosphorylation. Functionally, component of the cytochrome c oxidase, the last enzyme in the mitochondrial electron transport chain which drives oxidative phosphorylation. The respiratory chain contains 3 multisubunit complexes succinate dehydrogenase (complex II, CII), ubiquinol-cytochrome c oxidoreductase (cytochrome b-c1 complex, complex III, CIII) and cytochrome c oxidase (complex IV, CIV), that cooperate to transfer electrons derived from NADH and succinate to molecular oxygen, creating an electrochemical gradient over the inner membrane that drives transmembrane transport and the ATP synthase. Cytochrome c oxidase is the component of the respiratory chain that catalyzes the reduction of oxygen to water. Electrons originating from reduced cytochrome c in the intermembrane space (IMS) are transferred via the dinuclear copper A center (CU(A)) of subunit 2 and heme A of subunit 1 to the active site in subunit 1, a binuclear center (BNC) formed by heme A3 and copper B (CU(B)). The BNC reduces molecular oxygen to 2 water molecules using 4 electrons from cytochrome c in the IMS and 4 protons from the mitochondrial matrix. Plays a role in proper central nervous system (CNS) development in vertebrates. The protein is Cytochrome c oxidase subunit 7B, mitochondrial (COX7B) of Pongo abelii (Sumatran orangutan).